Here is a 229-residue protein sequence, read N- to C-terminus: Enolase-phosphatase E1 (229 aa).

This sequence belongs to the HAD-like hydrolase superfamily. MasA/MtnC family. As to quaternary structure, monomer. It depends on Mg(2+) as a cofactor.

The catalysed reaction is 5-methylsulfanyl-2,3-dioxopentyl phosphate + H2O = 1,2-dihydroxy-5-(methylsulfanyl)pent-1-en-3-one + phosphate. It functions in the pathway amino-acid biosynthesis; L-methionine biosynthesis via salvage pathway; L-methionine from S-methyl-5-thio-alpha-D-ribose 1-phosphate: step 3/6. The protein operates within amino-acid biosynthesis; L-methionine biosynthesis via salvage pathway; L-methionine from S-methyl-5-thio-alpha-D-ribose 1-phosphate: step 4/6. Bifunctional enzyme that catalyzes the enolization of 2,3-diketo-5-methylthiopentyl-1-phosphate (DK-MTP-1-P) into the intermediate 2-hydroxy-3-keto-5-methylthiopentenyl-1-phosphate (HK-MTPenyl-1-P), which is then dephosphorylated to form the acireductone 1,2-dihydroxy-3-keto-5-methylthiopentene (DHK-MTPene). The sequence is that of Enolase-phosphatase E1 from Yersinia pseudotuberculosis serotype IB (strain PB1/+).